A 360-amino-acid chain; its full sequence is tRNA N6-adenosine threonylcarbamoyltransferase (360 aa).

Positions 111 and 115 each coordinate Fe cation. Residues 134 to 138 (LVSGG), Asp167, Gly180, Asp184, and Asn279 contribute to the substrate site. Residue Asp307 participates in Fe cation binding.

This sequence belongs to the KAE1 / TsaD family. The cofactor is Fe(2+).

The protein resides in the cytoplasm. The catalysed reaction is L-threonylcarbamoyladenylate + adenosine(37) in tRNA = N(6)-L-threonylcarbamoyladenosine(37) in tRNA + AMP + H(+). Its function is as follows. Required for the formation of a threonylcarbamoyl group on adenosine at position 37 (t(6)A37) in tRNAs that read codons beginning with adenine. Is involved in the transfer of the threonylcarbamoyl moiety of threonylcarbamoyl-AMP (TC-AMP) to the N6 group of A37, together with TsaE and TsaB. TsaD likely plays a direct catalytic role in this reaction. In Acaryochloris marina (strain MBIC 11017), this protein is tRNA N6-adenosine threonylcarbamoyltransferase.